Here is a 349-residue protein sequence, read N- to C-terminus: tRNA uridine(34) hydroxylase (349 aa).

One can recognise a Rhodanese domain in the interval 146–240 (DDPDAVFIDM…YARRAREQGL (95 aa)). Cys200 (cysteine persulfide intermediate) is an active-site residue. Residues 316 to 328 (EEQRRRRAGRENG) show a composition bias toward basic and acidic residues. The segment at 316-349 (EEQRRRRAGRENGNKIFNKSRGRLNTKLGIPDPE) is disordered.

The protein belongs to the TrhO family.

The enzyme catalyses uridine(34) in tRNA + AH2 + O2 = 5-hydroxyuridine(34) in tRNA + A + H2O. Catalyzes oxygen-dependent 5-hydroxyuridine (ho5U) modification at position 34 in tRNAs. This chain is tRNA uridine(34) hydroxylase, found in Enterobacter sp. (strain 638).